The chain runs to 257 residues: 1-(5-phosphoribosyl)-5-[(5-phosphoribosylamino)methylideneamino] imidazole-4-carboxamide isomerase (257 aa).

Aspartate 8 serves as the catalytic Proton acceptor. Aspartate 129 functions as the Proton donor in the catalytic mechanism.

Belongs to the HisA/HisF family.

Its subcellular location is the cytoplasm. It carries out the reaction 1-(5-phospho-beta-D-ribosyl)-5-[(5-phospho-beta-D-ribosylamino)methylideneamino]imidazole-4-carboxamide = 5-[(5-phospho-1-deoxy-D-ribulos-1-ylimino)methylamino]-1-(5-phospho-beta-D-ribosyl)imidazole-4-carboxamide. The protein operates within amino-acid biosynthesis; L-histidine biosynthesis; L-histidine from 5-phospho-alpha-D-ribose 1-diphosphate: step 4/9. The sequence is that of 1-(5-phosphoribosyl)-5-[(5-phosphoribosylamino)methylideneamino] imidazole-4-carboxamide isomerase from Trichormus variabilis (strain ATCC 29413 / PCC 7937) (Anabaena variabilis).